The primary structure comprises 791 residues: Putative inactive tyrosine-protein kinase Wsck (791 aa).

An N-terminal signal peptide occupies residues 1–26; it reads MECGSHSGHRPIPIWLSSCLVAMCLG. Topologically, residues 27 to 401 are extracellular; it reads LPLGAAVPQE…YATFEKGQSS (375 aa). The WSC domain maps to 39-125; it reads AYYYVGCYTA…VGVHSYYSTI (87 aa). Positions 131–246 constitute a Fibronectin type-III domain; the sequence is GPHHLRISNK…ASIEATTEVG (116 aa). N139, N217, and N329 each carry an N-linked (GlcNAc...) asparagine glycan. Residues 402–422 form a helical membrane-spanning segment; sequence VVALAVTCVIFGSCLLLSLIA. Residues 423 to 791 lie on the Cytoplasmic side of the membrane; the sequence is YFYLRYKTCR…PQLEAVATMG (369 aa). The Protein kinase domain occupies 493-758; sequence LNVNDVIGDG…DVAFGVRQLM (266 aa). Residue 499-507 coordinates ATP; that stretch reads IGDGRFGEI.

This sequence belongs to the protein kinase superfamily. Tyr protein kinase family.

The protein localises to the membrane. In terms of biological role, probably lacks tyrosine-protein kinase activity. This is Putative inactive tyrosine-protein kinase Wsck from Drosophila melanogaster (Fruit fly).